The chain runs to 240 residues: MAPK-interacting and spindle-stabilizing protein-like (240 aa).

The segment at 1-240 (MSDEFSLADA…PMPGGPHSYH (240 aa)) is disordered. S2 is subject to N-acetylserine. Phosphoserine is present on residues S2, S6, and S15. Over residues 16–26 (PAKTSAVSNTK) the composition is skewed to polar residues. Over residues 34-43 (WPGSNPWNNP) the composition is skewed to low complexity. Pro residues-rich tracts occupy residues 44–66 (SAPP…PFGP), 74–122 (SVPP…PELP), 159–185 (PNMP…PPVP), and 193–202 (AWGPPAPYPA).

Belongs to the MISS family.

This chain is MAPK-interacting and spindle-stabilizing protein-like (MAPK1IP1L), found in Bos taurus (Bovine).